Here is a 121-residue protein sequence, read N- to C-terminus: Large ribosomal subunit protein bL19 (121 aa).

This sequence belongs to the bacterial ribosomal protein bL19 family.

Functionally, this protein is located at the 30S-50S ribosomal subunit interface and may play a role in the structure and function of the aminoacyl-tRNA binding site. The sequence is that of Large ribosomal subunit protein bL19 from Amoebophilus asiaticus (strain 5a2).